The primary structure comprises 1157 residues: Hephaestin (1157 aa).

A signal peptide spans 1–18; that stretch reads MKAGHLLWALLLMHSLWS. Topologically, residues 19–1109 are extracellular; the sequence is IPTDGAIRNY…PIKDVEILSS (1091 aa). Plastocyanin-like domains follow at residues 24–206, 218–366, 370–559, 569–717, 730–902, and 910–1066; these read AIRN…LITC, QRKD…VDSC, PPVD…LLVC, KQKG…VSQC, ASRV…LVIC, and NGGR…SHEE. N-linked (GlcNAc...) asparagine glycans are attached at residues Asn-49 and Asn-54. The Na(+) site is built by Gly-70 and Tyr-73. The Cu(2+) site is built by His-126 and His-128. His-126 contacts O2. Residues Lys-134, Asp-152, and Asp-153 each coordinate Ca(2+). N-linked (GlcNAc...) asparagine glycosylation occurs at Asn-164. Cys-180 and Cys-206 are oxidised to a cystine. The Cu(2+) site is built by His-186 and His-188. His-186 is an O2 binding site. Asn-236 carries an N-linked (GlcNAc...) asparagine glycan. Ser-265 is a Na(+) binding site. Cysteines 285 and 366 form a disulfide. Cu(2+) is bound by residues His-304, Cys-347, and His-352. Na(+) contacts are provided by Tyr-416, Gly-425, and Tyr-428. A disulfide bridge links Cys-533 with Cys-559. Asn-587 carries an N-linked (GlcNAc...) asparagine glycan. Residue Ser-616 coordinates Na(+). Cys-636 and Cys-717 are oxidised to a cystine. The Cu(2+) site is built by His-655, Cys-698, His-703, and Met-708. N-linked (GlcNAc...) asparagine glycosylation is found at Asn-713 and Asn-757. Residues Phe-768 and Gly-777 each contribute to the Na(+) site. Cys-876 and Cys-902 form a disulfide bridge. N-linked (GlcNAc...) asparagine glycosylation is present at Asn-930. Cu(2+) is bound by residues His-999, His-1002, His-1004, His-1044, Cys-1045, His-1046, His-1050, and Met-1055. The O2 site is built by His-1002 and His-1004. Position 1046 (His-1046) interacts with O2. Residues 1110–1130 traverse the membrane as a helical segment; that stretch reads ALIAICVLLLLIALALGGVVW. Residues 1131–1157 lie on the Cytoplasmic side of the membrane; the sequence is YQHRQRKLRRNRRSILDDSFKLLSLKQ. A phosphoserine mark is found at Ser-1144, Ser-1149, and Ser-1154.

It belongs to the multicopper oxidase family. In terms of assembly, part of a complex composed of SLC40A1/ferroportin, TF/transferrin and HEPH/hephaestin that transfers iron from cells to transferrin. It depends on Cu cation as a cofactor.

It is found in the basolateral cell membrane. The enzyme catalyses 4 Fe(2+) + O2 + 4 H(+) = 4 Fe(3+) + 2 H2O. Its function is as follows. Plasma membrane ferroxidase that mediates the extracellular conversion of ferrous/Fe(2+) iron into its ferric/Fe(3+) form. Couples ferroportin which specifically exports ferrous/Fe(2+) iron from cells to transferrin that only binds and shuttles extracellular ferric/Fe(3+) iron throughout the body. By helping iron transfer from cells to blood mainly contributes to dietary iron absorption by the intestinal epithelium and more generally regulates iron levels in the body. In Mus musculus (Mouse), this protein is Hephaestin.